A 788-amino-acid chain; its full sequence is Choline transporter-like protein 1 (788 aa).

A helical membrane pass occupies residues 98-118 (FLFFVFLCGWVVVASLGIMWG). N-linked (GlcNAc...) asparagine glycosylation occurs at Asn276. 4 helical membrane-spanning segments follow: residues 329–349 (WWQT…WTVI), 352–372 (LLGS…LGFG), 409–429 (FVVA…ILFI), and 458–478 (LFPF…AIWL). Residue Asn497 is glycosylated (N-linked (GlcNAc...) asparagine). A run of 5 helical transmembrane segments spans residues 531-551 (LFAF…ALAG), 583-603 (LGSI…RVML), 620-640 (WFLM…KFLT), 679-699 (AGIL…ILSF), and 718-738 (YYFV…DLFF).

This sequence belongs to the CTL (choline transporter-like) family.

The protein localises to the membrane. This chain is Choline transporter-like protein 1 (chtl-1), found in Caenorhabditis briggsae.